A 189-amino-acid polypeptide reads, in one-letter code: Phosphoheptose isomerase (189 aa).

Positions 34 to 189 constitute an SIS domain; it reads LVDALGNGKK…CDLLEKRLFG (156 aa). Substrate is bound at residue 49–51; sequence NGG. Zn(2+) contacts are provided by H58 and E62. Substrate is bound by residues E62, 91-92, 117-119, S122, and Q169; these read ND and STS. 2 residues coordinate Zn(2+): Q169 and H177.

This sequence belongs to the SIS family. GmhA subfamily. As to quaternary structure, homotetramer. Zn(2+) serves as cofactor.

The protein resides in the cytoplasm. The enzyme catalyses 2 D-sedoheptulose 7-phosphate = D-glycero-alpha-D-manno-heptose 7-phosphate + D-glycero-beta-D-manno-heptose 7-phosphate. It functions in the pathway carbohydrate biosynthesis; D-glycero-D-manno-heptose 7-phosphate biosynthesis; D-glycero-alpha-D-manno-heptose 7-phosphate and D-glycero-beta-D-manno-heptose 7-phosphate from sedoheptulose 7-phosphate: step 1/1. Its function is as follows. Catalyzes the isomerization of sedoheptulose 7-phosphate in D-glycero-D-manno-heptose 7-phosphate. This is Phosphoheptose isomerase from Geotalea uraniireducens (strain Rf4) (Geobacter uraniireducens).